Here is a 203-residue protein sequence, read N- to C-terminus: Outer-membrane lipoprotein LolB (203 aa).

Positions 1–22 (MPVNLNHTLLLCLLVAASLLSG) are cleaved as a signal peptide. Cys23 carries N-palmitoyl cysteine lipidation. A lipid anchor (S-diacylglycerol cysteine) is attached at Cys23.

This sequence belongs to the LolB family. In terms of assembly, monomer.

The protein resides in the cell outer membrane. Functionally, plays a critical role in the incorporation of lipoproteins in the outer membrane after they are released by the LolA protein. In Shewanella denitrificans (strain OS217 / ATCC BAA-1090 / DSM 15013), this protein is Outer-membrane lipoprotein LolB.